The sequence spans 88 residues: Small ribosomal subunit protein bS16c (88 aa).

It belongs to the bacterial ribosomal protein bS16 family.

The protein resides in the plastid. It localises to the chloroplast. This Atropa belladonna (Belladonna) protein is Small ribosomal subunit protein bS16c.